A 131-amino-acid polypeptide reads, in one-letter code: Plastocyanin (131 aa).

The signal sequence occupies residues 1–34; that stretch reads MKFFASLSKRFAPVLSLVVLVAGTLLLSAAPASA. Positions 35–131 constitute a Plastocyanin-like domain; sequence ATVQIKMGTD…AGMVGTITVE (97 aa). The Cu cation site is built by histidine 73, cysteine 116, histidine 119, and methionine 124.

This sequence belongs to the plastocyanin family. Cu(2+) is required as a cofactor.

The protein localises to the cellular thylakoid membrane. In terms of biological role, participates in electron transfer between P700 and the cytochrome b6-f complex in photosystem I. This is Plastocyanin (petE) from Prochlorothrix hollandica.